We begin with the raw amino-acid sequence, 1480 residues long: MQRSPLEKASVVSKLFFSWTRPILRKGYRQRLELSDIYQIPSADSADNLSEKLEREWDRELASKKNPKLINALRRCFFWRFMFYGIFLYLGEVTKAVQPLLLGRIIASYDPDNKEERSIAIYLGIGLCLLFIVRTLLLHPAIFGLHHIGMQMRIAMFSLIYKKTLKLSSRVLDKISIGQLVSLLSNNLNKFDEGLALAHFVWIAPLQVALLMGLIWELLQASAFCGLGFLIVLALFQAGLGRMMMKYRDQRAGKISERLVITSEMIENIQSVKAYCWEEAMEKMIENLRQTELKLTRKAAYVRYFNSSAFFFSGFFVVFLSVLPYALIKGIVLRKIFTTISFCIVLRMAVTRQFPWAVQTWYDSLGAINKIQDFLQKQEYKTLEYNLTTTEVVMENVTAFWEEGFGELFEKAKQNNNNRKTSNGDDSLFFSNFSLLGTPVLKDINFKIERGQLLAVAGSTGAGKTSLLMMIMGELEPSEGKIKHSGRISFCSQFSWIMPGTIKENIIFGVSYDEYRYRSVIKACQLEEDISKFAEKDNIVLGEGGITLSGGQRARISLARAVYKDADLYLLDSPFGYLDVLTEKEIFESCICKLMANKTRILVTSKMEHLKKADKILILHEGSSYFYGTFSELQNLRPDFSSKLMGCDSFDQFSAERRNSILTETLRRFSLEGDAPVSWTETKKQSFKQTGEFGEKRKNSILNPINSIRKFSIVPKTPLQMNGIEEDSDEPLERRLSLVPDSEQGEAILPHISVISTGPTLQARRRQSVLNLMTHSINQGQSIHRKTTASTRKVSLAPQANLTELDIYSRRLSQETGLEISEEINEEDLKECFFDDMESIPAVTTWNTYLRYITVHKSLIFVLIWCLVIFLAEVAASLVVLWLLGNTPLQDKGNSTHSRNNSYAVIITSTSSYYVFYIYVGVADTLLAMGFFRGLPLVHTLITVSKILHHKMLHSVLQAPMSTLNTLKAGGILNRFSKDIAILDDLLPLTIFDFIQLLLIVIGAIAVVAVLQPYIFVATVPVIVAFIMLRAYFLQTSQQLKQLESEGRSPIFTHLVTSLKGLWTLRAFGRQPYFETLFHKALNLHTANWFLYLSTLRWFQMRIEMIFVMFFIAVTFISILTTGEGEGRIGIILTLAMNIMSTLQWAVNSSIDVDSLMRSVSRVFKFIDMPTEGKPTKSTKPYKNGQLSKVMIIENSHVKKDDIWPSGGQMTVKDLSAKYTEGGNAILENISFSISPGQRVGLLGRTGSGKSTLLSALLRLLNTEGEIQIDGVSWDSITLQQWRKAFGVIPQKVFIFSGTFRKNLDPYEQWSDQEIWKVADEVGLRSVIEQFPGKLDFVLVDGGCVLSHGHKQLMCLARSVLSKAKILLLDEPSAHLDPVTYQIIRRTLKQAFADCTVILCEHRIEAMLECQQFLVIEENKVRQYDSIQKLLNERSLFRQAISPSDRVKLFPHRNSSKGKSQPQIAALKEETEEEVQDTRL.

Topologically, residues 1 to 77 (MQRSPLEKAS…KLINALRRCF (77 aa)) are cytoplasmic. A helical transmembrane segment spans residues 78–98 (FWRFMFYGIFLYLGEVTKAVQ). Positions 81-365 (FMFYGIFLYL…WAVQTWYDSL (285 aa)) constitute an ABC transmembrane type-1 1 domain. Topologically, residues 99–122 (PLLLGRIIASYDPDNKEERSIAIY) are extracellular. Residues 123–146 (LGIGLCLLFIVRTLLLHPAIFGLH) traverse the membrane as a helical segment. The Cytoplasmic portion of the chain corresponds to 147-195 (HIGMQMRIAMFSLIYKKTLKLSSRVLDKISIGQLVSLLSNNLNKFDEGL). A helical transmembrane segment spans residues 196-216 (ALAHFVWIAPLQVALLMGLIW). The Extracellular segment spans residues 217 to 222 (ELLQAS). The chain crosses the membrane as a helical span at residues 223–243 (AFCGLGFLIVLALFQAGLGRM). At 244-298 (MMKYRDQRAGKISERLVITSEMIENIQSVKAYCWEEAMEKMIENLRQTELKLTRK) the chain is on the cytoplasmic side. Residues 299-319 (AAYVRYFNSSAFFFSGFFVVF) traverse the membrane as a helical segment. The Extracellular portion of the chain corresponds to 320–339 (LSVLPYALIKGIVLRKIFTT). The helical transmembrane segment at 340-358 (ISFCIVLRMAVTRQFPWAV) threads the bilayer. Residues 359-858 (QTWYDSLGAI…YLRYITVHKS (500 aa)) are Cytoplasmic-facing. ATP-binding positions include Trp-401, Ser-434, 458 to 465 (GSTGAGKT), and Gln-493. Positions 423–646 (NGDDSLFFSN…RPDFSSKLMG (224 aa)) constitute an ABC transporter 1 domain. A lipid anchor (S-palmitoyl cysteine) is attached at Cys-524. Phosphoserine is present on residues Ser-549 and Ser-660. A disordered R region region spans residues 654–831 (SAERRNSILT…EEINEEDLKE (178 aa)). Ser-670 is subject to Phosphoserine; by PKA. A Phosphoserine modification is found at Ser-686. Lys-688 is covalently cross-linked (Glycyl lysine isopeptide (Lys-Gly) (interchain with G-Cter in ubiquitin)). Phosphoserine occurs at positions 700 and 712. Residue Thr-717 is modified to Phosphothreonine. Phosphoserine is present on residues Ser-737, Ser-753, Ser-768, Ser-790, Ser-795, and Ser-813. A helical transmembrane segment spans residues 859-879 (LIFVLIWCLVIFLAEVAASLV). The ABC transmembrane type-1 2 domain maps to 859-1155 (LIFVLIWCLV…AVNSSIDVDS (297 aa)). Topologically, residues 880–918 (VLWLLGNTPLQDKGNSTHSRNNSYAVIITSTSSYYVFYI) are extracellular. N-linked (GlcNAc...) asparagine glycosylation is found at Asn-894 and Asn-900. Residues 919-939 (YVGVADTLLAMGFFRGLPLVH) traverse the membrane as a discontinuously helical segment. The Cytoplasmic segment spans residues 940-990 (TLITVSKILHHKMLHSVLQAPMSTLNTLKAGGILNRFSKDIAILDDLLPLT). Residues 991–1011 (IFDFIQLLLIVIGAIAVVAVL) traverse the membrane as a helical segment. The Extracellular portion of the chain corresponds to 1012–1013 (QP). Residues 1014–1034 (YIFVATVPVIVAFIMLRAYFL) form a helical membrane-spanning segment. The Cytoplasmic portion of the chain corresponds to 1035-1095 (QTSQQLKQLE…TANWFLYLST (61 aa)). Residues 1096–1116 (LRWFQMRIEMIFVMFFIAVTF) traverse the membrane as a helical segment. Residues 1117–1130 (ISILTTGEGEGRIG) lie on the Extracellular side of the membrane. A helical membrane pass occupies residues 1131-1151 (IILTLAMNIMSTLQWAVNSSI). Over 1152 to 1480 (DVDSLMRSVS…TEEEVQDTRL (329 aa)) the chain is Cytoplasmic. An ABC transporter 2 domain is found at 1210–1443 (MTVKDLSAKY…RSLFRQAISP (234 aa)). Residues Tyr-1219 and 1244–1251 (GRTGSGKS) each bind ATP. An interaction with GORASP2 region spans residues 1386–1480 (RTLKQAFADC…TEEEVQDTRL (95 aa)). Cys-1395 carries the S-palmitoyl cysteine lipid modification. Ser-1444 and Ser-1456 each carry phosphoserine. Residues 1451–1480 (PHRNSSKGKSQPQIAALKEETEEEVQDTRL) form a disordered region. Over residues 1470–1480 (ETEEEVQDTRL) the composition is skewed to acidic residues. The PDZ-binding motif lies at 1478 to 1480 (TRL).

This sequence belongs to the ABC transporter superfamily. ABCC family. CFTR transporter (TC 3.A.1.202) subfamily. As to quaternary structure, monomer; does not require oligomerization for channel activity. May form oligomers in the membrane. Interacts with SLC26A3, SLC26A6 and NHERF1. Interacts with SHANK2. Interacts with MYO6. Interacts (via C-terminus) with GOPC (via PDZ domain); this promotes CFTR internalization and thereby decreases channel activity. Interacts with SLC4A7 through NHERF1. Found in a complex with MYO5B and RAB11A. Interacts with ANO1. Interacts with SLC26A8. Interacts with AHCYL1; the interaction increases CFTR activity. Interacts with CSE1L. The core-glycosylated form interacts with GORASP2 (via PDZ GRASP-type 1 domain) in respone to ER stress. Interacts with MARCHF2; the interaction leads to CFTR ubiqtuitination and degradation. Interacts with ADGRG2. N-glycosylated. Post-translationally, phosphorylated; cAMP treatment promotes phosphorylation and activates the channel. Dephosphorylation decreases the ATPase activity (in vitro). Phosphorylation at PKA sites activates the channel. Phosphorylation at PKC sites enhances the response to phosphorylation by PKA. Phosphorylated by AMPK; this inhibits channel activity. In terms of processing, ubiquitinated, leading to its degradation in the lysosome. Deubiquitination by USP10 in early endosomes enhances its endocytic recycling to the cell membrane. Ubiquitinated by RNF185 during ER stress. Ubiquitinated by MARCHF2.

The protein resides in the apical cell membrane. It is found in the early endosome membrane. Its subcellular location is the cell membrane. The protein localises to the recycling endosome membrane. It localises to the endoplasmic reticulum membrane. The protein resides in the nucleus. The catalysed reaction is ATP + H2O + closed Cl(-) channel = ADP + phosphate + open Cl(-) channel.. It carries out the reaction chloride(in) = chloride(out). The enzyme catalyses hydrogencarbonate(in) = hydrogencarbonate(out). It catalyses the reaction ATP + H2O = ADP + phosphate + H(+). Epithelial ion channel that plays an important role in the regulation of epithelial ion and water transport and fluid homeostasis. Mediates the transport of chloride ions across the cell membrane. Possesses an intrinsic ATPase activity and utilizes ATP to gate its channel; the passive flow of anions through the channel is gated by cycles of ATP binding and hydrolysis by the ATP-binding domains. The ion channel is also permeable to HCO(3)(-); selectivity depends on the extracellular chloride concentration. Exerts its function also by modulating the activity of other ion channels and transporters. Contributes to the regulation of the pH and the ion content of the epithelial fluid layer. Modulates the activity of the epithelial sodium channel (ENaC) complex, in part by regulating the cell surface expression of the ENaC complex. May regulate bicarbonate secretion and salvage in epithelial cells by regulating the transporter SLC4A7. Can inhibit the chloride channel activity of ANO1. Plays a role in the chloride and bicarbonate homeostasis during sperm epididymal maturation and capacitation. This chain is Cystic fibrosis transmembrane conductance regulator, found in Nomascus leucogenys (Northern white-cheeked gibbon).